The sequence spans 184 residues: UPF0302 protein OB1778 (184 aa).

Belongs to the UPF0302 family.

This is UPF0302 protein OB1778 from Oceanobacillus iheyensis (strain DSM 14371 / CIP 107618 / JCM 11309 / KCTC 3954 / HTE831).